Consider the following 508-residue polypeptide: Class E vacuolar protein-sorting machinery protein HSE1 (508 aa).

The region spanning 14 to 144 is the VHS domain; the sequence is ATDPGLRVDN…KIKISHPELI (131 aa). Over residues 143–162 the composition is skewed to basic and acidic residues; that stretch reads LISEPRVPKKKEMSKDREVE. The segment at 143–163 is disordered; that stretch reads LISEPRVPKKKEMSKDREVEE. The UIM domain occupies 162-181; sequence EEEKELAEALRLSLLEFEKT. Residues 222–281 enclose the SH3 domain; that stretch reads TVIRKVRAMYDFNSTEQDELSFKKGDLICVVEQVYRDWWRGTLAGSVGIFPLNYVTPVTE. Over residues 385-400 the composition is skewed to pro residues; that stretch reads PAPMTGPAPTPGPQSP. Positions 385 to 508 are disordered; it reads PAPMTGPAPT…YNMSSNSNAQ (124 aa). Positions 401 to 419 are enriched in polar residues; the sequence is MSPTAQYTSPTNTQTQMNG. Positions 429–449 are enriched in low complexity; it reads LPQQTQQIQQSEQTQQPLSQI. The span at 450–470 shows a compositional bias: polar residues; sequence NSPQNYASSVGNTNYTGTNHI. Low complexity predominate over residues 483 to 497; it reads MSMQSIPPQQPQMPQ. Residues 499 to 508 are compositionally biased toward polar residues; sequence YNMSSNSNAQ.

It belongs to the STAM family. As to quaternary structure, component of the ESCRT-0 complex composed of HSE1 and VPS27.

Its subcellular location is the endosome membrane. Functionally, component of the ESCRT-0 complex which is the sorting receptor for ubiquitinated cargo proteins at the multivesicular body (MVB). The polypeptide is Class E vacuolar protein-sorting machinery protein HSE1 (HSE1) (Kluyveromyces lactis (strain ATCC 8585 / CBS 2359 / DSM 70799 / NBRC 1267 / NRRL Y-1140 / WM37) (Yeast)).